Here is a 569-residue protein sequence, read N- to C-terminus: Nuclear control of ATPase protein 2 (569 aa).

2 consecutive transmembrane segments (helical) span residues 279–299 (WPTILIALAGGPAGIAAIWNA) and 442–462 (LVFGIVSISPALLILYVLCNS).

Its subcellular location is the mitochondrion membrane. Functionally, involved in the mitochondrial expression of subunits 6 and 8 of the F0-F1 ATP synthase. This Eremothecium gossypii (strain ATCC 10895 / CBS 109.51 / FGSC 9923 / NRRL Y-1056) (Yeast) protein is Nuclear control of ATPase protein 2 (NCA2).